The sequence spans 173 residues: Dual-action ribosomal maturation protein DarP (173 aa).

The protein belongs to the DarP family.

It is found in the cytoplasm. Its function is as follows. Member of a network of 50S ribosomal subunit biogenesis factors which assembles along the 30S-50S interface, preventing incorrect 23S rRNA structures from forming. Promotes peptidyl transferase center (PTC) maturation. In Pseudomonas putida (strain GB-1), this protein is Dual-action ribosomal maturation protein DarP.